We begin with the raw amino-acid sequence, 464 residues long: UDP-glycosyltransferase 76C1 (464 aa).

Residues Ser279, 338–340, 355–363, and 377–380 contribute to the UDP-alpha-D-glucose site; these read APQ, HNGWNSTLE, and KWDQ.

The protein belongs to the UDP-glycosyltransferase family.

Its activity is regulated as follows. Inhibited by olomoucine and 3-isobutyl-1-methylxanthine. Involved in the N-glucosylation of cytokinins. Catalyzes the formation of both the 7-N and the 9-N-glucosides. This is UDP-glycosyltransferase 76C1 (UGT76C1) from Arabidopsis thaliana (Mouse-ear cress).